The chain runs to 92 residues: MARSLKKGPFVHYKLEQKVAQNVESGKKAVIKTWSRASMITPDFVGQTIAVHNGKQFVPVYVTENMVGHKLGEFSPTRSFRGHAGAKNKGRK.

The tract at residues 73–92 is disordered; sequence EFSPTRSFRGHAGAKNKGRK. A compositionally biased stretch (basic residues) spans 80 to 92; it reads FRGHAGAKNKGRK.

It belongs to the universal ribosomal protein uS19 family.

Protein S19 forms a complex with S13 that binds strongly to the 16S ribosomal RNA. The protein is Small ribosomal subunit protein uS19 of Christiangramia forsetii (strain DSM 17595 / CGMCC 1.15422 / KT0803) (Gramella forsetii).